The chain runs to 241 residues: Homeobox protein TGIF2LX (241 aa).

2 disordered regions span residues 1–58 (MEAA…GNLP) and 127–207 (GKGA…ELVS). A compositionally biased stretch (polar residues) spans 10 to 39 (ETQSPVQKDSPAKTQSPAQDTSIMSRNNAD). Residues 48–111 (EHKKKRKGNL…INARRRILPD (64 aa)) constitute a DNA-binding region (homeobox; TALE-type).

This sequence belongs to the TALE/TGIF homeobox family.

The protein resides in the nucleus. Its function is as follows. May have a transcription role in testis. The polypeptide is Homeobox protein TGIF2LX (TGIF2LX) (Pan paniscus (Pygmy chimpanzee)).